We begin with the raw amino-acid sequence, 122 residues long: Large ribosomal subunit protein uL14c (122 aa).

It belongs to the universal ribosomal protein uL14 family. In terms of assembly, part of the 50S ribosomal subunit.

It is found in the plastid. Binds to 23S rRNA. This chain is Large ribosomal subunit protein uL14c, found in Euglena longa (Euglenophycean alga).